The following is a 251-amino-acid chain: MRRPMVAGNWKMHGTRASVAELTQGLGNMLIPEGIEVAVFPPALFINEVIDGLKGKGITVGAQNSAVQPEQGALTGEVAPSQLAEVGCKFVLIGHSERRQVIGESEEVLNRKFAAAQKSGLTPVLCIGETLEEREAGKTLEVVGRQLSSVIDAFGIAAFANAVIAYEPVWAIGTGLTASPQQAQDVHAAIRKQLAAKDAEVAQNVQLLYGGSVKAANAAELFGMPDIDGGLIGGASLNADEFGAICRAAGN.

9 to 11 provides a ligand contact to substrate; that stretch reads NWK. Histidine 95 functions as the Electrophile in the catalytic mechanism. Glutamate 167 serves as the catalytic Proton acceptor. Substrate is bound by residues glycine 173, serine 212, and 233–234; that span reads GG.

It belongs to the triosephosphate isomerase family. In terms of assembly, homodimer.

The protein resides in the cytoplasm. The enzyme catalyses D-glyceraldehyde 3-phosphate = dihydroxyacetone phosphate. It participates in carbohydrate biosynthesis; gluconeogenesis. The protein operates within carbohydrate degradation; glycolysis; D-glyceraldehyde 3-phosphate from glycerone phosphate: step 1/1. Involved in the gluconeogenesis. Catalyzes stereospecifically the conversion of dihydroxyacetone phosphate (DHAP) to D-glyceraldehyde-3-phosphate (G3P). In Pseudomonas putida (strain W619), this protein is Triosephosphate isomerase.